Here is a 247-residue protein sequence, read N- to C-terminus: Inhibitory synaptic factor 1 (247 aa).

Positions 30-65 (RAVIGQLEGILRDLKEVAKELKEVVEQIDRLTSDFE) form a coiled coil. 3 disordered regions span residues 69-90 (DTDD…GGPL), 112-166 (ASTP…RDRV), and 180-217 (DDSE…GVRK). The span at 76 to 85 (GTVSSTSSSE) shows a compositional bias: polar residues.

Belongs to the INSYN1 family.

The protein resides in the postsynaptic density. Its function is as follows. May be a component of the protein machinery at the inhibitory synapses, probably acting as a scaffold. The protein is Inhibitory synaptic factor 1 of Xenopus laevis (African clawed frog).